Reading from the N-terminus, the 372-residue chain is Glutamine synthetase (372 aa).

The region spanning 26 to 105 (IIAEYVWIDS…VLAECWNNDG (80 aa)) is the GS beta-grasp domain. The region spanning 112–372 (HRHEAAKLFE…MTKEYERESL (261 aa)) is the GS catalytic domain.

Belongs to the glutamine synthetase family. In terms of assembly, homooctamer.

It is found in the cytoplasm. It carries out the reaction L-glutamate + NH4(+) + ATP = L-glutamine + ADP + phosphate + H(+). This chain is Glutamine synthetase (GLN1), found in Kluyveromyces lactis (strain ATCC 8585 / CBS 2359 / DSM 70799 / NBRC 1267 / NRRL Y-1140 / WM37) (Yeast).